Consider the following 298-residue polypeptide: Acetyl-coenzyme A carboxylase carboxyl transferase subunit beta (298 aa).

A disordered region spans residues 1 to 21 (MNQEVKSGKVLSPSTPWTQRP). Residues 20 to 67 (RPVPGIEVADEQQTLKATFTEPTIECPECHALVTRTAISFNAYVCPQC) form a C4-type zinc finger. The CoA carboxyltransferase N-terminal domain occupies 41–298 (PTIECPECHA…RLVSKLMNLP (258 aa)). Residues Cys-45, Cys-48, Cys-64, and Cys-67 each contribute to the Zn(2+) site.

The protein belongs to the AccD/PCCB family. As to quaternary structure, acetyl-CoA carboxylase is a heterohexamer composed of biotin carboxyl carrier protein (AccB), biotin carboxylase (AccC) and two subunits each of ACCase subunit alpha (AccA) and ACCase subunit beta (AccD). It depends on Zn(2+) as a cofactor.

The protein localises to the cytoplasm. The catalysed reaction is N(6)-carboxybiotinyl-L-lysyl-[protein] + acetyl-CoA = N(6)-biotinyl-L-lysyl-[protein] + malonyl-CoA. Its pathway is lipid metabolism; malonyl-CoA biosynthesis; malonyl-CoA from acetyl-CoA: step 1/1. In terms of biological role, component of the acetyl coenzyme A carboxylase (ACC) complex. Biotin carboxylase (BC) catalyzes the carboxylation of biotin on its carrier protein (BCCP) and then the CO(2) group is transferred by the transcarboxylase to acetyl-CoA to form malonyl-CoA. This is Acetyl-coenzyme A carboxylase carboxyl transferase subunit beta from Acinetobacter baumannii (strain SDF).